The chain runs to 205 residues: Small ribosomal subunit protein uS4 (205 aa).

Positions 1 to 16 (MSKRESSKYKIDRRMG) are enriched in basic and acidic residues. Positions 1-46 (MSKRESSKYKIDRRMGENIWGRPKSPVNRREYGPGQHGQRRKGKLS) are disordered. The 64-residue stretch at 94-157 (SRLDAIVYRA…KQLVTVLEAV (64 aa)) folds into the S4 RNA-binding domain.

Belongs to the universal ribosomal protein uS4 family. Part of the 30S ribosomal subunit. Contacts protein S5. The interaction surface between S4 and S5 is involved in control of translational fidelity.

Its function is as follows. One of the primary rRNA binding proteins, it binds directly to 16S rRNA where it nucleates assembly of the body of the 30S subunit. With S5 and S12 plays an important role in translational accuracy. This chain is Small ribosomal subunit protein uS4, found in Rhizobium etli (strain ATCC 51251 / DSM 11541 / JCM 21823 / NBRC 15573 / CFN 42).